An 87-amino-acid chain; its full sequence is uncharacterized protein (87 aa).

The chain crosses the membrane as a helical span at residues 63–83 (IVLALVLGVFSLVGLIFIIYF).

It is found in the membrane. This is an uncharacterized protein from Dictyostelium discoideum (Social amoeba).